A 484-amino-acid chain; its full sequence is HTH-type transcriptional regulator TauR (484 aa).

The HTH gntR-type domain occupies 16 to 84 (GSLQHRLRQM…GRSGTFVSAA (69 aa)). The H-T-H motif DNA-binding region spans 44-63 (TRALAAHLGVARITVTLAYA). The residue at position 330 (lysine 330) is an N6-(pyridoxal phosphate)lysine.

The protein in the C-terminal section; belongs to the class-I pyridoxal-phosphate-dependent aminotransferase family. The cofactor is pyridoxal 5'-phosphate.

Its function is as follows. Transcriptional activator, which is essential for taurine-dependent expression of the tpa-tauR-xsc operon. Acts by binding to direct repeats in the promoter region. The polypeptide is HTH-type transcriptional regulator TauR (Rhodobacter capsulatus (strain ATCC BAA-309 / NBRC 16581 / SB1003)).